Here is a 438-residue protein sequence, read N- to C-terminus: Xylose isomerase (438 aa).

The Mg(2+) site is built by Asp306 and Asp308.

Belongs to the xylose isomerase family. Homotetramer. Mg(2+) is required as a cofactor.

The protein resides in the cytoplasm. It catalyses the reaction alpha-D-xylose = alpha-D-xylulofuranose. This Pseudomonas fluorescens (strain SBW25) protein is Xylose isomerase.